Consider the following 187-residue polypeptide: Epididymal-specific lipocalin-10 (187 aa).

An N-terminal signal peptide occupies residues 1–19 (MRQGLLVLALVLVLVLVLA). Residues Cys90 and Cys163 are joined by a disulfide bond. Asn149 carries an N-linked (GlcNAc...) asparagine glycan. At Lys170 the chain carries N6-acetyllysine.

The protein belongs to the calycin superfamily. Lipocalin family.

The protein localises to the secreted. In terms of biological role, may play a role in male fertility. May act as a retinoid carrier protein within the epididymis. The chain is Epididymal-specific lipocalin-10 (LCN10) from Homo sapiens (Human).